Consider the following 130-residue polypeptide: MTANDPLSDALSGIDNAESVGHLTHTVAPASNMVGSVLEVFYDRGYIDGFEFVDNGKAGRFEVELKGAINECGPVNPRYSVGADGFEQWEKRYLPARDYGSLVVTTSHGIMSHYEAREAGIGGQVIAYVY.

It belongs to the universal ribosomal protein uS8 family. In terms of assembly, part of the 30S ribosomal subunit.

One of the primary rRNA binding proteins, it binds directly to 16S rRNA central domain where it helps coordinate assembly of the platform of the 30S subunit. The chain is Small ribosomal subunit protein uS8 from Halobacterium salinarum (strain ATCC 29341 / DSM 671 / R1).